The primary structure comprises 952 residues: Valine--tRNA ligase (952 aa).

The 'HIGH' region signature appears at 42–52; the sequence is PNVTGSLHMGH. The 'KMSKS' region signature appears at 554–558; that stretch reads KMSKS. K557 provides a ligand contact to ATP. A coiled-coil region spans residues 888-952; sequence AELARLDGEI…EEQKKTIAAL (65 aa).

Belongs to the class-I aminoacyl-tRNA synthetase family. ValS type 1 subfamily. Monomer.

The protein localises to the cytoplasm. The enzyme catalyses tRNA(Val) + L-valine + ATP = L-valyl-tRNA(Val) + AMP + diphosphate. Its function is as follows. Catalyzes the attachment of valine to tRNA(Val). As ValRS can inadvertently accommodate and process structurally similar amino acids such as threonine, to avoid such errors, it has a 'posttransfer' editing activity that hydrolyzes mischarged Thr-tRNA(Val) in a tRNA-dependent manner. This chain is Valine--tRNA ligase, found in Vibrio parahaemolyticus serotype O3:K6 (strain RIMD 2210633).